A 467-amino-acid polypeptide reads, in one-letter code: Protein CitXG (467 aa).

The apo-citrate lyase phosphoribosyl-dephospho-CoA transferase stretch occupies residues 1–178 (MDYFEGGERL…NKMLHNFEKS (178 aa)). The segment at 179 to 467 (KMIVPQMTQS…IFLARLVGSL (289 aa)) is 2-(5''-triphosphoribosyl)-3'-dephosphocoenzyme-A synthase.

In the N-terminal section; belongs to the CitX family. This sequence in the C-terminal section; belongs to the CitG/MdcB family.

It catalyses the reaction apo-[citrate lyase ACP] + 2'-(5''-triphospho-alpha-D-ribosyl)-3'-dephospho-CoA = holo-[citrate lyase ACP] + diphosphate. It carries out the reaction 3'-dephospho-CoA + ATP = 2'-(5''-triphospho-alpha-D-ribosyl)-3'-dephospho-CoA + adenine. Bifunctional enzyme that catalyzes formation of 2-(5''-triphosphoribosyl)-3'-dephosphocoenzyme-A, and then the transfer of this prosthetic group precursor to the apo-acyl carrier protein (gamma chain) of the citrate lyase to yield the holo-acyl carrier protein. The sequence is that of Protein CitXG (citXG) from Leuconostoc mesenteroides subsp. cremoris.